A 205-amino-acid chain; its full sequence is Thiamine-phosphate synthase (205 aa).

Residues 35–39 (QYRDK) and asparagine 67 contribute to the 4-amino-2-methyl-5-(diphosphooxymethyl)pyrimidine site. Residues aspartate 68 and aspartate 86 each coordinate Mg(2+). Threonine 105 contacts 4-amino-2-methyl-5-(diphosphooxymethyl)pyrimidine. 132–134 (SQT) contacts 2-[(2R,5Z)-2-carboxy-4-methylthiazol-5(2H)-ylidene]ethyl phosphate. Lysine 135 contributes to the 4-amino-2-methyl-5-(diphosphooxymethyl)pyrimidine binding site. Glycine 162 is a binding site for 2-[(2R,5Z)-2-carboxy-4-methylthiazol-5(2H)-ylidene]ethyl phosphate.

Belongs to the thiamine-phosphate synthase family. It depends on Mg(2+) as a cofactor.

The catalysed reaction is 2-[(2R,5Z)-2-carboxy-4-methylthiazol-5(2H)-ylidene]ethyl phosphate + 4-amino-2-methyl-5-(diphosphooxymethyl)pyrimidine + 2 H(+) = thiamine phosphate + CO2 + diphosphate. It catalyses the reaction 2-(2-carboxy-4-methylthiazol-5-yl)ethyl phosphate + 4-amino-2-methyl-5-(diphosphooxymethyl)pyrimidine + 2 H(+) = thiamine phosphate + CO2 + diphosphate. The enzyme catalyses 4-methyl-5-(2-phosphooxyethyl)-thiazole + 4-amino-2-methyl-5-(diphosphooxymethyl)pyrimidine + H(+) = thiamine phosphate + diphosphate. The protein operates within cofactor biosynthesis; thiamine diphosphate biosynthesis; thiamine phosphate from 4-amino-2-methyl-5-diphosphomethylpyrimidine and 4-methyl-5-(2-phosphoethyl)-thiazole: step 1/1. Functionally, condenses 4-methyl-5-(beta-hydroxyethyl)thiazole monophosphate (THZ-P) and 2-methyl-4-amino-5-hydroxymethyl pyrimidine pyrophosphate (HMP-PP) to form thiamine monophosphate (TMP). This Pseudomonas syringae pv. tomato (strain ATCC BAA-871 / DC3000) protein is Thiamine-phosphate synthase.